An 860-amino-acid chain; its full sequence is Beta-glucosidase 1 (860 aa).

Residues 1 to 19 (MKLSWLEAAALTAASVVSA) form the signal peptide. N-linked (GlcNAc...) asparagine glycosylation is found at asparagine 61, asparagine 211, and asparagine 252. The active site involves aspartate 280. 12 N-linked (GlcNAc...) asparagine glycosylation sites follow: asparagine 315, asparagine 322, asparagine 354, asparagine 387, asparagine 442, asparagine 523, asparagine 542, asparagine 564, asparagine 658, asparagine 668, asparagine 690, and asparagine 712.

The protein belongs to the glycosyl hydrolase 3 family.

The catalysed reaction is Hydrolysis of terminal, non-reducing beta-D-glucosyl residues with release of beta-D-glucose.. It participates in glycan metabolism; cellulose degradation. The chain is Beta-glucosidase 1 from Aspergillus aculeatus.